A 473-amino-acid chain; its full sequence is 3-isopropylmalate dehydratase large subunit (473 aa).

[4Fe-4S] cluster contacts are provided by Cys-354, Cys-414, and Cys-417.

It belongs to the aconitase/IPM isomerase family. LeuC type 1 subfamily. As to quaternary structure, heterodimer of LeuC and LeuD. The cofactor is [4Fe-4S] cluster.

The catalysed reaction is (2R,3S)-3-isopropylmalate = (2S)-2-isopropylmalate. It functions in the pathway amino-acid biosynthesis; L-leucine biosynthesis; L-leucine from 3-methyl-2-oxobutanoate: step 2/4. Functionally, catalyzes the isomerization between 2-isopropylmalate and 3-isopropylmalate, via the formation of 2-isopropylmaleate. In Mycobacterium ulcerans (strain Agy99), this protein is 3-isopropylmalate dehydratase large subunit.